The following is a 177-amino-acid chain: Peptidoglycan-associated lipoprotein (177 aa).

The first 32 residues, 1–32 (MSRTNISALSPMQKLARNPAVIAMTLALALAG), serve as a signal peptide directing secretion. Residue C33 is the site of N-palmitoyl cysteine attachment. C33 carries S-diacylglycerol cysteine lipidation. One can recognise an OmpA-like domain in the interval 59-176 (QQDFTVNVGD…RAVTVLGGAG (118 aa)).

It belongs to the Pal lipoprotein family. As to quaternary structure, the Tol-Pal system is composed of five core proteins: the inner membrane proteins TolA, TolQ and TolR, the periplasmic protein TolB and the outer membrane protein Pal. They form a network linking the inner and outer membranes and the peptidoglycan layer.

It localises to the cell outer membrane. In terms of biological role, part of the Tol-Pal system, which plays a role in outer membrane invagination during cell division and is important for maintaining outer membrane integrity. This is Peptidoglycan-associated lipoprotein from Agrobacterium fabrum (strain C58 / ATCC 33970) (Agrobacterium tumefaciens (strain C58)).